We begin with the raw amino-acid sequence, 206 residues long: Small ribosomal subunit protein uS4 (206 aa).

The tract at residues 27 to 47 (PSESKCNMNAAPGQHGGRRGR) is disordered. The region spanning 96 to 158 (QRLDNVVYRM…SRKQIRIQSA (63 aa)) is the S4 RNA-binding domain.

Belongs to the universal ribosomal protein uS4 family. Part of the 30S ribosomal subunit. Contacts protein S5. The interaction surface between S4 and S5 is involved in control of translational fidelity.

In terms of biological role, one of the primary rRNA binding proteins, it binds directly to 16S rRNA where it nucleates assembly of the body of the 30S subunit. With S5 and S12 plays an important role in translational accuracy. In Dichelobacter nodosus (strain VCS1703A), this protein is Small ribosomal subunit protein uS4.